Reading from the N-terminus, the 189-residue chain is Prostaglandin-H2 D-isomerase (189 aa).

Residues 1–24 (MATPSSLWLGLALLGTLGVLQTPA) form the signal peptide. The residue at position 25 (glutamine 25) is a Pyrrolidone carboxylic acid. Residue asparagine 49 is glycosylated (N-linked (GlcNAc...) asparagine). Cysteine 63 serves as the catalytic Nucleophile. Asparagine 76 is a glycosylation site (N-linked (GlcNAc...) asparagine). Residues cysteine 87 and cysteine 184 are joined by a disulfide bond.

The protein belongs to the calycin superfamily. Lipocalin family. As to quaternary structure, monomer. Abundant in the brain and CNS, where it is expressed in tissues of the blood-brain barrier and secreted into the cerebro-spinal fluid.

The protein resides in the rough endoplasmic reticulum. It is found in the nucleus membrane. Its subcellular location is the golgi apparatus. The protein localises to the cytoplasm. It localises to the perinuclear region. The protein resides in the secreted. The enzyme catalyses prostaglandin H2 = prostaglandin D2. In terms of biological role, catalyzes the conversion of PGH2 to PGD2, a prostaglandin involved in smooth muscle contraction/relaxation and a potent inhibitor of platelet aggregation. Involved in a variety of CNS functions, such as sedation, NREM sleep and PGE2-induced allodynia, and may have an anti-apoptotic role in oligodendrocytes. Binds small non-substrate lipophilic molecules, including biliverdin, bilirubin, retinal, retinoic acid and thyroid hormone, and may act as a scavenger for harmful hydrophobic molecules and as a secretory retinoid and thyroid hormone transporter. Possibly involved in development and maintenance of the blood-brain, blood-retina, blood-aqueous humor and blood-testis barrier. It is likely to play important roles in both maturation and maintenance of the central nervous system and male reproductive system. Involved in PLA2G3-dependent maturation of mast cells. PLA2G3 is secreted by immature mast cells and acts on nearby fibroblasts upstream to PTDGS to synthesize PGD2, which in turn promotes mast cell maturation and degranulation via PTGDR. The chain is Prostaglandin-H2 D-isomerase (PTGDS) from Sus scrofa (Pig).